We begin with the raw amino-acid sequence, 382 residues long: Cytochrome b (382 aa).

Transmembrane regions (helical) follow at residues 33–53 (FGSLLGLCLASQIVTGLFLAM), 77–98 (WLVRNMHANGASFFFICLYTHI), 113–133 (WTVGVILLLLTMMTAFVGYVL), and 178–198 (FFAFHFLLPFVIAAFTAIHLL). Heme b contacts are provided by histidine 83 and histidine 97. Heme b is bound by residues histidine 182 and histidine 196. Residue histidine 201 coordinates a ubiquinone. Helical transmembrane passes span 226 to 246 (LKDLLGFTILILTLTSVALLT), 288 to 308 (LGGVLALLASVLILATVPFLQ), 320 to 340 (LTQLVFWTLIANIAILTWIGG), and 347 to 367 (FVSIGQLASLAYFSIFLIIIP).

The protein belongs to the cytochrome b family. The cytochrome bc1 complex contains 3 respiratory subunits (MT-CYB, CYC1 and UQCRFS1), 2 core proteins (UQCRC1 and UQCRC2) and probably 6 low-molecular weight proteins. It depends on heme b as a cofactor.

Its subcellular location is the mitochondrion inner membrane. In terms of biological role, component of the ubiquinol-cytochrome c reductase complex (complex III or cytochrome b-c1 complex) that is part of the mitochondrial respiratory chain. The b-c1 complex mediates electron transfer from ubiquinol to cytochrome c. Contributes to the generation of a proton gradient across the mitochondrial membrane that is then used for ATP synthesis. In Sigmops gracilis (Slender fangjaw), this protein is Cytochrome b (mt-cyb).